The following is a 364-amino-acid chain: MEASAAKITPMASSMSASGSTNSPSSEKMNYALQVALQTIKERCIQLQRRVASMEEENQQLREASSRSEGAPRANEIGVTGDVLSLKAQVSELQRQKEQLEEHIGMVSNENRRLWSRLSQISKDQQLNALPSSTDSRAQQNQNLVRSKTFTQHSPNPHLRQKMLSDGIKDLSLEEIALDDFGASSEELGYPYNLQKVEETTSEPDANVDAKRCLDGLQELRREAMKQQQELRSVMTLLENRIALKPCPECAQKTIKKPEMADKSLETDDSLTSELKNYESQHNGHNGTPPSQRINIIQEKIKADAADAMEKTCPMCGKQYSSQVSFNAFREHVEMHFIDDALELESENSIERQFEFVSHAVGDF.

Positions 1 to 26 are disordered; it reads MEASAAKITPMASSMSASGSTNSPSS. The segment covering 9–26 has biased composition (low complexity); the sequence is TPMASSMSASGSTNSPSS. Residues 32–114 are a coiled coil; it reads ALQVALQTIK…GMVSNENRRL (83 aa). At S53 the chain carries Phosphoserine. Residues 56-75 form a disordered region; that stretch reads EENQQLREASSRSEGAPRAN. A phosphoserine mark is found at S85, S172, and S202. The stretch at 210 to 243 forms a coiled coil; that stretch reads AKRCLDGLQELRREAMKQQQELRSVMTLLENRIA. A phosphoserine mark is found at S264 and S270. The UBZ1-type zinc-finger motif lies at 310-336; sequence EKTCPMCGKQYSSQVSFNAFREHVEMH. C313 and C316 together coordinate Zn(2+). Residue S325 is modified to Phosphoserine. Residues H332 and H336 each contribute to the Zn(2+) site. The residue at position 349 (S349) is a Phosphoserine.

Forms homooligomers. Interacts with the dynein light chain ctp. Interacts (via C-terminus) with IKKepsilon; this leads to phosphorylation of spn-F. Forms ternary complexes with ctp and IKKepsilon; this is required for spn-F redistribution from puncta in larval neurons and for dendrite pruning. Interacts with ctp and IKKepsilon through distinct regions. Interacts (via C-terminus) with jvl. Post-translationally, phosphorylated by IKKepsilon. Phosphorylation is required for spn-F neuronal distribution and dendrite pruning and reduces spn-F homooligomerization. It does not lead to spn-F degradation. In pupal bristles, localizes to the bristle tip throughout the elongation period (at protein level).

It localises to the cytoplasm. It is found in the cytoskeleton. The protein resides in the cell projection. The protein localises to the axon. Its subcellular location is the dendrite. It localises to the perikaryon. Functionally, plays a role in oocyte axis determination and microtubule organization during oogenesis. Also required for polarized organization of the bristle. Required, with jvl, for activation of the kinase IKKepsilon in the germ line. Also required for localization of IKKepsilon to the distal tip of elongating bristles by acting as an adapter linking IKKepsilon and cytoplasmic dynein. Involved in dendrite pruning in larval sensory neurons during metamorphosis. The protein is Protein spindle-F of Drosophila melanogaster (Fruit fly).